Reading from the N-terminus, the 372-residue chain is Fatty acid conjugase FAC2 B (372 aa).

2 consecutive transmembrane segments (helical) span residues 44-64 and 74-94; these read YFLFHDIIVTCILFYVASNYI and IVWPVYWISQGVFLGRLWMIG. A Histidine box-1 motif is present at residues 95 to 99; it reads HECGH. The short motif at 131 to 135 is the Histidine box-2 element; it reads HRNHH. 3 consecutive transmembrane segments (helical) span residues 166-186, 217-237, and 240-260; these read IGLMITMLCKLTFGYAAYIMF, VLFSDIGICIVLYACYRIVTV, and AMPAFYVYGIPWVIMSAILFA. The Histidine box-3 motif lies at 304–308; that stretch reads HVIHH.

This sequence belongs to the fatty acid desaturase type 1 family. In terms of tissue distribution, expressed exclusively in the developing seeds. Not detected in leaves.

Its subcellular location is the microsome membrane. The catalysed reaction is a (9Z,12Z)-octadecadienoyl-containing glycerolipid + AH2 + O2 = a (8E,10E,12Z)-octadecatrienoyl-containing glycerolipid + A + 2 H2O. Its pathway is lipid metabolism; polyunsaturated fatty acid biosynthesis. Fatty acid conjugase converting 18:2(9Z, 12Z) to calendic acid 18:3(8E, 10E, 12Z). Converts alpha-linolenic acid (18:3(9Z, 12Z, 15Z)) into 18:4(8E, 10E, 12Z, 15Z). Also has weak activity on the mono-unsaturates 16:1(9Z) and 18:1(9Z) producing two conjugated double bonds at delta(8) and delta(10) position. The chain is Fatty acid conjugase FAC2 B from Calendula officinalis (Pot marigold).